The following is a 282-amino-acid chain: Elongation factor Ts (282 aa).

Residues 80-83 (TDFV) are involved in Mg(2+) ion dislocation from EF-Tu.

Belongs to the EF-Ts family.

The protein localises to the cytoplasm. Functionally, associates with the EF-Tu.GDP complex and induces the exchange of GDP to GTP. It remains bound to the aminoacyl-tRNA.EF-Tu.GTP complex up to the GTP hydrolysis stage on the ribosome. This Aliivibrio salmonicida (strain LFI1238) (Vibrio salmonicida (strain LFI1238)) protein is Elongation factor Ts.